The sequence spans 196 residues: Imidazoleglycerol-phosphate dehydratase (196 aa).

This sequence belongs to the imidazoleglycerol-phosphate dehydratase family.

It localises to the cytoplasm. It carries out the reaction D-erythro-1-(imidazol-4-yl)glycerol 3-phosphate = 3-(imidazol-4-yl)-2-oxopropyl phosphate + H2O. The protein operates within amino-acid biosynthesis; L-histidine biosynthesis; L-histidine from 5-phospho-alpha-D-ribose 1-diphosphate: step 6/9. The sequence is that of Imidazoleglycerol-phosphate dehydratase from Chlorobium chlorochromatii (strain CaD3).